Here is a 367-residue protein sequence, read N- to C-terminus: Glutamate 5-kinase (367 aa).

Lys9 provides a ligand contact to ATP. Residues Ser49, Asp136, and Asn148 each contribute to the substrate site. ATP contacts are provided by residues 168–169 (TD) and 210–216 (TGGMKSK). Positions 276–350 (SGQIEVDAGA…GMQSQDIQVR (75 aa)) constitute a PUA domain.

Belongs to the glutamate 5-kinase family.

It localises to the cytoplasm. It carries out the reaction L-glutamate + ATP = L-glutamyl 5-phosphate + ADP. It participates in amino-acid biosynthesis; L-proline biosynthesis; L-glutamate 5-semialdehyde from L-glutamate: step 1/2. Its function is as follows. Catalyzes the transfer of a phosphate group to glutamate to form L-glutamate 5-phosphate. The protein is Glutamate 5-kinase of Bacillus cereus (strain G9842).